The primary structure comprises 144 residues: Large ribosomal subunit protein uL11 (144 aa).

Belongs to the universal ribosomal protein uL11 family. In terms of assembly, part of the ribosomal stalk of the 50S ribosomal subunit. Interacts with L10 and the large rRNA to form the base of the stalk. L10 forms an elongated spine to which L12 dimers bind in a sequential fashion forming a multimeric L10(L12)X complex. In terms of processing, one or more lysine residues are methylated.

Its function is as follows. Forms part of the ribosomal stalk which helps the ribosome interact with GTP-bound translation factors. This Polaromonas naphthalenivorans (strain CJ2) protein is Large ribosomal subunit protein uL11.